The chain runs to 269 residues: Triosephosphate isomerase (269 aa).

8 to 10 (NWK) lines the substrate pocket. H105 functions as the Electrophile in the catalytic mechanism. The active-site Proton acceptor is E183. Substrate contacts are provided by residues G189, S227, and 248–249 (GG).

Belongs to the triosephosphate isomerase family. Homodimer.

It is found in the cytoplasm. It catalyses the reaction D-glyceraldehyde 3-phosphate = dihydroxyacetone phosphate. It participates in carbohydrate biosynthesis; gluconeogenesis. The protein operates within carbohydrate degradation; glycolysis; D-glyceraldehyde 3-phosphate from glycerone phosphate: step 1/1. Its function is as follows. Involved in the gluconeogenesis. Catalyzes stereospecifically the conversion of dihydroxyacetone phosphate (DHAP) to D-glyceraldehyde-3-phosphate (G3P). This chain is Triosephosphate isomerase, found in Psychrobacter arcticus (strain DSM 17307 / VKM B-2377 / 273-4).